The chain runs to 147 residues: MREVIIYTDGACSGNPGPGGWGAVLLYGSHRKELSGFHPHTTNNRMEIQAAIEALRALKYPCKVKLYSDSAYLVNAFRQNWLRTWQRNGWVNSRKQPVENQDLWQELLEAARPHQVEWLKVQGHADVAENNRCDELARAAIAAGTQG.

The RNase H type-1 domain occupies 1-142 (MREVIIYTDG…CDELARAAIA (142 aa)). The Mg(2+) site is built by Asp-9, Glu-47, Asp-69, and Asp-134.

Belongs to the RNase H family. In terms of assembly, monomer. The cofactor is Mg(2+).

It is found in the cytoplasm. The enzyme catalyses Endonucleolytic cleavage to 5'-phosphomonoester.. Endonuclease that specifically degrades the RNA of RNA-DNA hybrids. In Symbiobacterium thermophilum (strain DSM 24528 / JCM 14929 / IAM 14863 / T), this protein is Ribonuclease H.